A 262-amino-acid chain; its full sequence is Putative ankyrin repeat protein R848 (262 aa).

ANK repeat units lie at residues 8–37 (SNDY…NVTH), 38–67 (DNNY…DIRD), 68–97 (CRDY…NIRA), 99–127 (DDYA…NFRA), 128–157 (DNDY…DIRA), 159–187 (DDYA…DFRS), and 189–217 (NNAS…DVNT).

The chain is Putative ankyrin repeat protein R848 from Acanthamoeba polyphaga (Amoeba).